The chain runs to 394 residues: Choline/ethanolamine kinase (394 aa).

Residues 1 to 42 (MAADGTGVVGGGAVGGGLPKDGLQDAKCPEPIPNRRRASSLS) form a disordered region. Ala2 carries the N-acetylalanine modification. The span at 7–19 (GVVGGGAVGGGLP) shows a compositional bias: gly residues. ATP-binding positions include 75–81 (SGGLSNL), Arg104, 146–152 (QYLPSRP), Gln244, and Asp264. A substrate-binding site is contributed by 77-79 (GLS).

The protein belongs to the choline/ethanolamine kinase family. As to quaternary structure, homodimer, and heterodimer with CHKA. In terms of tissue distribution, expressed ubiquitously with the highest level in testis.

It catalyses the reaction choline + ATP = phosphocholine + ADP + H(+). It carries out the reaction ethanolamine + ATP = phosphoethanolamine + ADP + H(+). Its pathway is phospholipid metabolism; phosphatidylethanolamine biosynthesis; phosphatidylethanolamine from ethanolamine: step 1/3. Functionally, has a key role in phospholipid metabolism, and catalyzes the first step of phosphatidylethanolamine and phosphatidylcholine biosynthesis. This is Choline/ethanolamine kinase (Chkb) from Mus musculus (Mouse).